We begin with the raw amino-acid sequence, 398 residues long: MNKEMTHKKSNGIIEWIDYRLPIFSFFKHFSYYQTPKNLNYLWTLGSIAGIALVIQIITGVILAMHYTPHVDHAFESVERIMRNVNYGWLLRYTHTVGASMFFATIYLHIARGLYYGSYKTPRELLWHIGIIIFLIMMATAFMGYVLPWGQMSYWSATVITNLFSAIPLIGEPIVIWLCGGFSVDNPTLNRFFSLHYLFPFIIVALVILHLLALHQHGSNNPKGIDVKSTKDTIPFHPYYTVKDFVGFGVYFIIFAYFIFYEPNYLGHPDNYIPANPLVTPAHIVPEWYFRPFYAILRAVPSKLAGVFLMFGSIFVLFLLPWLDTSKIRSGNYRPIYRIAFWIFMADCLFLGYLGSKPPAEPYIIISRFSACYYFCHFLVVLPLIGKYEKPLPLPNEL.

A helical membrane pass occupies residues 45 to 65 (LGSIAGIALVIQIITGVILAM). Positions 95 and 109 each coordinate heme b. A run of 8 helical transmembrane segments spans residues 97–117 (VGAS…LYYG), 129–149 (IGII…VLPW), 164–184 (FSAI…GFSV), 192–212 (FFSL…LHLL), 245–265 (FVGF…EPNY), 304–324 (LAGV…PWLD), 335–355 (PIYR…GYLG), and 364–384 (IIIS…VLPL). The heme b site is built by His-196 and His-210.

It belongs to the cytochrome b family. In terms of assembly, the main subunits of complex b-c1 are: cytochrome b, cytochrome c1 and the Rieske protein. It depends on heme b as a cofactor.

The protein resides in the cell membrane. Its function is as follows. Component of the ubiquinol-cytochrome c reductase complex (complex III or cytochrome b-c1 complex), which is a respiratory chain that generates an electrochemical potential coupled to ATP synthesis. The protein is Cytochrome b (petB) of Rickettsia typhi (strain ATCC VR-144 / Wilmington).